The sequence spans 342 residues: Thymidylate synthase (342 aa).

Residues R31 and 156-157 (RR) contribute to the dUMP site. Residue C176 is the Nucleophile of the active site. DUMP-binding positions include 196–199 (RSGD), N207, and 237–239 (HVY). Position 199 (D199) interacts with (6R)-5,10-methylene-5,6,7,8-tetrahydrofolate. Residue A341 participates in (6R)-5,10-methylene-5,6,7,8-tetrahydrofolate binding.

It belongs to the thymidylate synthase family. Bacterial-type ThyA subfamily. Homodimer.

It localises to the cytoplasm. It carries out the reaction dUMP + (6R)-5,10-methylene-5,6,7,8-tetrahydrofolate = 7,8-dihydrofolate + dTMP. It functions in the pathway pyrimidine metabolism; dTTP biosynthesis. Functionally, catalyzes the reductive methylation of 2'-deoxyuridine-5'-monophosphate (dUMP) to 2'-deoxythymidine-5'-monophosphate (dTMP) while utilizing 5,10-methylenetetrahydrofolate (mTHF) as the methyl donor and reductant in the reaction, yielding dihydrofolate (DHF) as a by-product. This enzymatic reaction provides an intracellular de novo source of dTMP, an essential precursor for DNA biosynthesis. In Haloferax volcanii (Halobacterium volcanii), this protein is Thymidylate synthase.